We begin with the raw amino-acid sequence, 606 residues long: Elongation factor 4 (606 aa).

Residues 11–193 (DKIRNFSIVA…AIVTRLPPPK (183 aa)) enclose the tr-type G domain. GTP is bound by residues 23 to 28 (DHGKST) and 140 to 143 (NKVD).

The protein belongs to the TRAFAC class translation factor GTPase superfamily. Classic translation factor GTPase family. LepA subfamily.

It is found in the cell inner membrane. It carries out the reaction GTP + H2O = GDP + phosphate + H(+). Its function is as follows. Required for accurate and efficient protein synthesis under certain stress conditions. May act as a fidelity factor of the translation reaction, by catalyzing a one-codon backward translocation of tRNAs on improperly translocated ribosomes. Back-translocation proceeds from a post-translocation (POST) complex to a pre-translocation (PRE) complex, thus giving elongation factor G a second chance to translocate the tRNAs correctly. Binds to ribosomes in a GTP-dependent manner. The chain is Elongation factor 4 from Caulobacter vibrioides (strain ATCC 19089 / CIP 103742 / CB 15) (Caulobacter crescentus).